The sequence spans 239 residues: tRNA (guanine-N(7)-)-methyltransferase (239 aa).

S-adenosyl-L-methionine contacts are provided by Glu69, Glu94, Asp121, and Asp144. Residue Asp144 is part of the active site. Lys148 lines the substrate pocket. Positions 150 to 155 (RHNKRR) are interaction with RNA. Substrate contacts are provided by residues Asp180 and 217 to 220 (TKFE).

It belongs to the class I-like SAM-binding methyltransferase superfamily. TrmB family. As to quaternary structure, monomer.

It carries out the reaction guanosine(46) in tRNA + S-adenosyl-L-methionine = N(7)-methylguanosine(46) in tRNA + S-adenosyl-L-homocysteine. Its pathway is tRNA modification; N(7)-methylguanine-tRNA biosynthesis. Its function is as follows. Catalyzes the formation of N(7)-methylguanine at position 46 (m7G46) in tRNA. In Yersinia pestis (strain Pestoides F), this protein is tRNA (guanine-N(7)-)-methyltransferase.